A 145-amino-acid chain; its full sequence is uncharacterized protein (145 aa).

The segment covering 1–18 has biased composition (basic and acidic residues); the sequence is MAEQQPSKEEKKEDKKDE. A disordered region spans residues 1-61; the sequence is MAEQQPSKEE…CTEGEWDASD (61 aa).

This is an uncharacterized protein from Caenorhabditis elegans.